A 212-amino-acid polypeptide reads, in one-letter code: FMN-dependent NADH:quinone oxidoreductase (212 aa).

Residues Ser-9, 15-17 (SVS), and 138-141 (TRGG) each bind FMN.

It belongs to the azoreductase type 1 family. In terms of assembly, homodimer. FMN is required as a cofactor.

It catalyses the reaction 2 a quinone + NADH + H(+) = 2 a 1,4-benzosemiquinone + NAD(+). The enzyme catalyses N,N-dimethyl-1,4-phenylenediamine + anthranilate + 2 NAD(+) = 2-(4-dimethylaminophenyl)diazenylbenzoate + 2 NADH + 2 H(+). Functionally, quinone reductase that provides resistance to thiol-specific stress caused by electrophilic quinones. In terms of biological role, also exhibits azoreductase activity. Catalyzes the reductive cleavage of the azo bond in aromatic azo compounds to the corresponding amines. The chain is FMN-dependent NADH:quinone oxidoreductase from Delftia acidovorans (strain DSM 14801 / SPH-1).